We begin with the raw amino-acid sequence, 31 residues long: Conotoxin (31 aa).

It belongs to the conotoxin S superfamily. In terms of processing, contains 5 disulfide bonds. In terms of tissue distribution, expressed by the venom duct.

The protein resides in the secreted. The protein is Conotoxin of Conus striatus (Striated cone).